A 72-amino-acid polypeptide reads, in one-letter code: UPF0270 protein YheU (72 aa).

The protein belongs to the UPF0270 family.

This is UPF0270 protein YheU from Escherichia coli (strain ATCC 8739 / DSM 1576 / NBRC 3972 / NCIMB 8545 / WDCM 00012 / Crooks).